A 278-amino-acid chain; its full sequence is Cation-dependent mannose-6-phosphate receptor (278 aa).

The N-terminal stretch at 1-21 is a signal peptide; sequence MFPFSGCWRTELLLLLLLAVA. Over 22–186 the chain is Lumenal; sequence VRESWQIEEK…SLACSPEVSH (165 aa). Positions 31-182 constitute an MRH domain; sequence KSCDLVGEKD…EMDSSLACSP (152 aa). Residues C33 and C79 are joined by a disulfide bond. 5 N-linked (GlcNAc...) asparagine glycosylation sites follow: N58, N84, N95, N108, and N114. Cystine bridges form between C133–C168 and C146–C180. Residues 187-211 traverse the membrane as a helical segment; it reads LSVGSILLVIFASLVAVYIIGGFLY. Residues 212-278 lie on the Cytoplasmic side of the membrane; that stretch reads QRLVVGAKGM…EERDDHLLPM (67 aa). Residues 257-278 form a disordered region; it reads RGVGDDQLGEESEERDDHLLPM. S268 is modified (phosphoserine).

Homodimer. Binds GGA1, GGA2 and GGA3.

The protein resides in the lysosome membrane. Functionally, transport of phosphorylated lysosomal enzymes from the Golgi complex and the cell surface to lysosomes. Lysosomal enzymes bearing phosphomannosyl residues bind specifically to mannose-6-phosphate receptors in the Golgi apparatus and the resulting receptor-ligand complex is transported to an acidic prelyosomal compartment where the low pH mediates the dissociation of the complex. The protein is Cation-dependent mannose-6-phosphate receptor (M6pr) of Mus musculus (Mouse).